Reading from the N-terminus, the 512-residue chain is cAMP-dependent protein kinase catalytic subunit (512 aa).

Residues 1–15 are compositionally biased toward polar residues; that stretch reads MDTTAVASKGSTNVG. Disordered regions lie at residues 1–79 and 118–166; these read MDTT…SSLW and IDNL…GLRD. Low complexity predominate over residues 16 to 27; it reads SSTDTLSTSASL. 2 stretches are compositionally biased toward polar residues: residues 32–52 and 62–79; these read NAGS…SFNG and SDAS…SSLW. A compositionally biased stretch (basic and acidic residues) spans 143 to 166; the sequence is SRDGRGELGSEHGERRSAMDGLRD. A Protein kinase domain is found at 201–456; it reads FNFLQTLGTG…SMDIIMHPWF (256 aa). Residues 207 to 215 and Lys-230 each bind ATP; that span reads LGTGSFGRV. Asp-324 functions as the Proton acceptor in the catalytic mechanism. Residue Thr-356 is modified to Phosphothreonine. The AGC-kinase C-terminal domain maps to 457–512; it reads RDISWDKILTRKIEVPYVPPIQAGMGDSSQFDAYADVATDYGTSEDPEFTSIFKDF.

It belongs to the protein kinase superfamily. AGC Ser/Thr protein kinase family. cAMP subfamily.

The enzyme catalyses L-seryl-[protein] + ATP = O-phospho-L-seryl-[protein] + ADP + H(+). It carries out the reaction L-threonyl-[protein] + ATP = O-phospho-L-threonyl-[protein] + ADP + H(+). With respect to regulation, activated by cAMP. The protein is cAMP-dependent protein kinase catalytic subunit (pka1) of Schizosaccharomyces pombe (strain 972 / ATCC 24843) (Fission yeast).